The sequence spans 458 residues: ATP synthase subunit beta (458 aa).

148 to 155 (GGAGVGKT) serves as a coordination point for ATP.

This sequence belongs to the ATPase alpha/beta chains family. F-type ATPases have 2 components, CF(1) - the catalytic core - and CF(0) - the membrane proton channel. CF(1) has five subunits: alpha(3), beta(3), gamma(1), delta(1), epsilon(1). CF(0) has three main subunits: a(1), b(2) and c(9-12). The alpha and beta chains form an alternating ring which encloses part of the gamma chain. CF(1) is attached to CF(0) by a central stalk formed by the gamma and epsilon chains, while a peripheral stalk is formed by the delta and b chains.

The protein resides in the cell inner membrane. It catalyses the reaction ATP + H2O + 4 H(+)(in) = ADP + phosphate + 5 H(+)(out). Produces ATP from ADP in the presence of a proton gradient across the membrane. The catalytic sites are hosted primarily by the beta subunits. This is ATP synthase subunit beta from Legionella pneumophila (strain Paris).